We begin with the raw amino-acid sequence, 100 residues long: Putative septation protein SpoVG (100 aa).

It belongs to the SpoVG family.

Its function is as follows. Could be involved in septation. The protein is Putative septation protein SpoVG of Clostridium novyi (strain NT).